The chain runs to 394 residues: Phosphoglycerate kinase (394 aa).

Residues 21 to 23 (DFN), Arg-37, 60 to 63 (HLGR), Arg-119, and Arg-152 each bind substrate. ATP-binding positions include Lys-202, Gly-293, Glu-324, and 350–353 (GGDS).

This sequence belongs to the phosphoglycerate kinase family. As to quaternary structure, monomer.

The protein localises to the cytoplasm. The enzyme catalyses (2R)-3-phosphoglycerate + ATP = (2R)-3-phospho-glyceroyl phosphate + ADP. It functions in the pathway carbohydrate degradation; glycolysis; pyruvate from D-glyceraldehyde 3-phosphate: step 2/5. The sequence is that of Phosphoglycerate kinase from Caldanaerobacter subterraneus subsp. tengcongensis (strain DSM 15242 / JCM 11007 / NBRC 100824 / MB4) (Thermoanaerobacter tengcongensis).